Here is a 668-residue protein sequence, read N- to C-terminus: DNA mismatch repair protein MutL (668 aa).

It belongs to the DNA mismatch repair MutL/HexB family.

Its function is as follows. This protein is involved in the repair of mismatches in DNA. It is required for dam-dependent methyl-directed DNA mismatch repair. May act as a 'molecular matchmaker', a protein that promotes the formation of a stable complex between two or more DNA-binding proteins in an ATP-dependent manner without itself being part of a final effector complex. This is DNA mismatch repair protein MutL from Limosilactobacillus reuteri (strain DSM 20016) (Lactobacillus reuteri).